The chain runs to 105 residues: UPF0235 protein RP839 (105 aa).

It belongs to the UPF0235 family.

This is UPF0235 protein RP839 from Rickettsia prowazekii (strain Madrid E).